The chain runs to 122 residues: NLFQFGEMIFEKTGKEAVHSYAIYGCYCGWGGQGRAMDATDRCCFVHDCCYGRVNGCNPKMATYSTSFQNGDIVCGDNDLCLRAVCECDRAAAICLGQNVNTYNKNYEHYSISHCMEESEQC.

Cystine bridges form between Cys-26–Cys-115, Cys-28–Cys-44, Cys-43–Cys-95, Cys-49–Cys-122, Cys-50–Cys-88, Cys-57–Cys-81, and Cys-75–Cys-86. Ca(2+) is bound by residues Tyr-27, Gly-29, and Gly-31. The active site involves His-47. Asp-48 contacts Ca(2+). Asp-89 is a catalytic residue.

It belongs to the phospholipase A2 family. Group II subfamily. D49 sub-subfamily. As to quaternary structure, heterodimer of an acidic subunit (CbIalpha or CbIbeta) and a basic subunit (CbII). The acidic subunit is non-toxic, and increases the toxicity of the basic subunit. Ca(2+) is required as a cofactor. Expressed by the venom gland.

It is found in the secreted. The catalysed reaction is a 1,2-diacyl-sn-glycero-3-phosphocholine + H2O = a 1-acyl-sn-glycero-3-phosphocholine + a fatty acid + H(+). Its function is as follows. Heterodimer: presynaptic neurotoxin. Functionally, monomer: Snake venom phospholipase A2 (PLA2) is inactive towards micellar phosphatidylcholine but is weakly active towards non-micellar dithiolecithin. PLA2 catalyzes the calcium-dependent hydrolysis of the 2-acyl groups in 3-sn-phosphoglycerides. The sequence is that of Acidic phospholipase A2 CbIalpha from Pseudocerastes fieldi (Field's horned viper).